Consider the following 304-residue polypeptide: Probable UDP-3-O-acylglucosamine N-acyltransferase 2, mitochondrial (304 aa).

The transit peptide at 1-47 (MAATLWRLYSKSICNSLQGIILNKPFIQKQLLLSSRTRSLSFSSDSQ) directs the protein to the mitochondrion. 159–161 (FGF) contributes to the UDP-N-acetyl-alpha-D-glucosamine binding site. 2 residues coordinate hexadecanoate: Asp209 and Gln213. His216 acts as the Proton acceptor in catalysis. Positions 217, 235, and 253 each coordinate UDP-N-acetyl-alpha-D-glucosamine.

It belongs to the transferase hexapeptide repeat family. LpxD subfamily. Homotrimer.

The protein resides in the mitochondrion. The enzyme catalyses a UDP-3-O-[(3R)-3-hydroxyacyl]-alpha-D-glucosamine + a (3R)-hydroxyacyl-[ACP] = a UDP-2-N,3-O-bis[(3R)-3-hydroxyacyl]-alpha-D-glucosamine + holo-[ACP] + H(+). It participates in glycolipid biosynthesis; lipid IV(A) biosynthesis; lipid IV(A) from (3R)-3-hydroxytetradecanoyl-[acyl-carrier-protein] and UDP-N-acetyl-alpha-D-glucosamine: step 3/6. In terms of biological role, involved in the biosynthesis of lipid A, a phosphorylated glycolipid that in bacteria anchors the lipopolysaccharide to the outer membrane of the cell. Lipid A-like molecules in plants may serve as structural components of the outer membranes of mitochondria and/or chloroplasts, or may be involved in signal transduction or plant defense responses. In Arabidopsis thaliana (Mouse-ear cress), this protein is Probable UDP-3-O-acylglucosamine N-acyltransferase 2, mitochondrial (LPXD2).